A 780-amino-acid chain; its full sequence is ATP-dependent 6-phosphofructokinase, liver type (780 aa).

Ala2 carries the N-acetylalanine modification. The tract at residues 2–390 (AAVDLEKLRA…NWNIYKLLAH (389 aa)) is N-terminal catalytic PFK domain 1. Residues Gly25, 88-89 (RC), and 118-121 (GDGS) contribute to the ATP site. Residue Asp119 coordinates Mg(2+). Substrate-binding positions include 164-166 (SID), Arg201, 208-210 (MGR), Glu264, Arg292, and 298-301 (HVQR). The Proton acceptor role is filled by Asp166. Residue Ser377 is modified to Phosphoserine. An interdomain linker region spans residues 391-400 (QKPPKEKSNF). The segment at 401 to 780 (SLAILNVGAP…RRTLSMDKGF (380 aa)) is C-terminal regulatory PFK domain 2. Residues Arg470, 527–531 (TISNN), Arg565, 572–574 (MGG), and Glu628 contribute to the beta-D-fructose 2,6-bisphosphate site. The O-linked (GlcNAc) serine glycan is linked to Ser529. Tyr640 is subject to Phosphotyrosine. Residues Arg654, 660–663 (HLQQ), and Arg734 each bind beta-D-fructose 2,6-bisphosphate. Ser775 carries the post-translational modification Phosphoserine.

This sequence belongs to the phosphofructokinase type A (PFKA) family. ATP-dependent PFK group I subfamily. Eukaryotic two domain clade 'E' sub-subfamily. As to quaternary structure, homo- and heterotetramers. Phosphofructokinase (PFK) enzyme functions as a tetramer composed of different combinations of 3 types of subunits, called PFKM (M), PFKL (L) and PFKP (P). The composition of the PFK tetramer differs according to the tissue type it is present in. The kinetic and regulatory properties of the tetrameric enzyme are dependent on the subunit composition, hence can vary across tissues. Requires Mg(2+) as cofactor. GlcNAcylation at Ser-529 by OGT decreases enzyme activity, leading to redirect glucose flux through the oxidative pentose phosphate pathway. Glycosylation is stimulated by both hypoxia and glucose deprivation.

Its subcellular location is the cytoplasm. It catalyses the reaction beta-D-fructose 6-phosphate + ATP = beta-D-fructose 1,6-bisphosphate + ADP + H(+). Its pathway is carbohydrate degradation; glycolysis; D-glyceraldehyde 3-phosphate and glycerone phosphate from D-glucose: step 3/4. Allosterically activated by ADP, AMP, or fructose 2,6-bisphosphate, and allosterically inhibited by ATP or citrate. GlcNAcylation by OGT overcomes allosteric regulation. In terms of biological role, catalyzes the phosphorylation of D-fructose 6-phosphate to fructose 1,6-bisphosphate by ATP, the first committing step of glycolysis. Negatively regulates the phagocyte oxidative burst in response to bacterial infection by controlling cellular NADPH biosynthesis and NADPH oxidase-derived reactive oxygen species. Upon macrophage activation, drives the metabolic switch toward glycolysis, thus preventing glucose turnover that produces NADPH via pentose phosphate pathway. This chain is ATP-dependent 6-phosphofructokinase, liver type (PFKL), found in Pongo abelii (Sumatran orangutan).